A 196-amino-acid polypeptide reads, in one-letter code: MNNAVFVIAAYLLGSISFGILVSKAFGLPDPRTVGSGNPGATNVLRSGKKLAALLTLLGDAAKGWLPVWLAQYYALPVGVVCWVAVAVFLGHLYPVFYRFKGGKGVATALGVLLAFSPLLAGLALLSWIVVFALTRFSSLAALTAAALAPGFAWLLLPQIGYIIVVFVLSLLLIWRHRSNIRKLLDGSEAGFGKKS.

A run of 4 helical transmembrane segments spans residues 3–23 (NAVFVIAAYLLGSISFGILVS), 78–98 (VGVVCWVAVAVFLGHLYPVFY), 112–132 (VLLAFSPLLAGLALLSWIVVF), and 154–174 (WLLLPQIGYIIVVFVLSLLLI).

This sequence belongs to the PlsY family. Probably interacts with PlsX.

It is found in the cell inner membrane. The catalysed reaction is an acyl phosphate + sn-glycerol 3-phosphate = a 1-acyl-sn-glycero-3-phosphate + phosphate. Its pathway is lipid metabolism; phospholipid metabolism. Functionally, catalyzes the transfer of an acyl group from acyl-phosphate (acyl-PO(4)) to glycerol-3-phosphate (G3P) to form lysophosphatidic acid (LPA). This enzyme utilizes acyl-phosphate as fatty acyl donor, but not acyl-CoA or acyl-ACP. The protein is Glycerol-3-phosphate acyltransferase of Methylobacillus flagellatus (strain ATCC 51484 / DSM 6875 / VKM B-1610 / KT).